We begin with the raw amino-acid sequence, 160 residues long: MTNGRVPMTPAGEQALRAELSRLKKTERPAIIEAIAEARDHGDLKENAEYHAARERQGIIEGRIKDIESKLSNAQVIDVTKLQANGMVIFGATVTVINVDTEEETTYQIVGEDEADIDNHKISVVAPLARALIKKEVGDEIILDTPKGKVTYEIVDVEYK.

It belongs to the GreA/GreB family.

Necessary for efficient RNA polymerase transcription elongation past template-encoded arresting sites. The arresting sites in DNA have the property of trapping a certain fraction of elongating RNA polymerases that pass through, resulting in locked ternary complexes. Cleavage of the nascent transcript by cleavage factors such as GreA or GreB allows the resumption of elongation from the new 3'terminus. GreA releases sequences of 2 to 3 nucleotides. In Francisella philomiragia subsp. philomiragia (strain ATCC 25017 / CCUG 19701 / FSC 153 / O#319-036), this protein is Transcription elongation factor GreA.